The following is a 256-amino-acid chain: Thiazole synthase (256 aa).

Lys-96 functions as the Schiff-base intermediate with DXP in the catalytic mechanism. 1-deoxy-D-xylulose 5-phosphate is bound by residues Gly-157, 183-184 (AG), and 205-206 (NT).

It belongs to the ThiG family. Homotetramer. Forms heterodimers with either ThiH or ThiS.

It localises to the cytoplasm. It carries out the reaction [ThiS sulfur-carrier protein]-C-terminal-Gly-aminoethanethioate + 2-iminoacetate + 1-deoxy-D-xylulose 5-phosphate = [ThiS sulfur-carrier protein]-C-terminal Gly-Gly + 2-[(2R,5Z)-2-carboxy-4-methylthiazol-5(2H)-ylidene]ethyl phosphate + 2 H2O + H(+). The protein operates within cofactor biosynthesis; thiamine diphosphate biosynthesis. Catalyzes the rearrangement of 1-deoxy-D-xylulose 5-phosphate (DXP) to produce the thiazole phosphate moiety of thiamine. Sulfur is provided by the thiocarboxylate moiety of the carrier protein ThiS. In vitro, sulfur can be provided by H(2)S. The chain is Thiazole synthase from Bacillus mycoides (strain KBAB4) (Bacillus weihenstephanensis).